Consider the following 66-residue polypeptide: Large ribosomal subunit protein bL33 (66 aa).

Belongs to the bacterial ribosomal protein bL33 family.

The chain is Large ribosomal subunit protein bL33 from Wolbachia pipientis subsp. Culex pipiens (strain wPip).